The chain runs to 259 residues: HTH-type transcriptional regulator TtgV (259 aa).

The region spanning 14–76 is the HTH iclR-type domain; it reads IQVIARAASI…GPAGGFRLGP (63 aa). A DNA-binding region (H-T-H motif) is located at residues 36–59; the sequence is LAAIAQLVGLPRSTVQRIINALEE. The 165-residue stretch at 89-253 folds into the IclR-ED domain; the sequence is ILSLVKPYLR…KLNIERAIGR (165 aa).

Its function is as follows. Represses the expression of the ttgGHI and ttgVW operons. Binds to the ttgGHI / ttgVW intergenic region, probably preventing binding of RNA polymerase; ttgV dissociates from this region in the presence of 1-hexanol. The protein is HTH-type transcriptional regulator TtgV (ttgV) of Pseudomonas putida (strain DOT-T1E).